The chain runs to 192 residues: Probable thymidylate kinase (192 aa).

7-14 contributes to the ATP binding site; sequence GIDGAGKS.

This sequence belongs to the thymidylate kinase family.

It catalyses the reaction dTMP + ATP = dTDP + ADP. This chain is Probable thymidylate kinase, found in Methanobrevibacter smithii (strain ATCC 35061 / DSM 861 / OCM 144 / PS).